Here is a 426-residue protein sequence, read N- to C-terminus: Serine--tRNA ligase (426 aa).

233–235 (TAE) lines the L-serine pocket. 264–266 (RSE) lines the ATP pocket. An L-serine-binding site is contributed by Glu-287. An ATP-binding site is contributed by 351–354 (EISS). Ser-387 contributes to the L-serine binding site.

This sequence belongs to the class-II aminoacyl-tRNA synthetase family. Type-1 seryl-tRNA synthetase subfamily. As to quaternary structure, homodimer. The tRNA molecule binds across the dimer.

It is found in the cytoplasm. It catalyses the reaction tRNA(Ser) + L-serine + ATP = L-seryl-tRNA(Ser) + AMP + diphosphate + H(+). The catalysed reaction is tRNA(Sec) + L-serine + ATP = L-seryl-tRNA(Sec) + AMP + diphosphate + H(+). Its pathway is aminoacyl-tRNA biosynthesis; selenocysteinyl-tRNA(Sec) biosynthesis; L-seryl-tRNA(Sec) from L-serine and tRNA(Sec): step 1/1. Catalyzes the attachment of serine to tRNA(Ser). Is also able to aminoacylate tRNA(Sec) with serine, to form the misacylated tRNA L-seryl-tRNA(Sec), which will be further converted into selenocysteinyl-tRNA(Sec). The protein is Serine--tRNA ligase of Clostridium botulinum (strain Langeland / NCTC 10281 / Type F).